The chain runs to 1327 residues: MELYESTYFIVLIPSVVITVIFLFFWLFMKETLYDEVLAKQKREQKLISTKTDKKKAEKKKNKKKEIQNGTLRESDSEHVPRDFKLSDASPAEDEQFVPAPLNVAETSSSVRERQKKEKKQKPSLEEQVIKESDASKIPGKKVEPVLVTKQPAPPPPLEAAALKKKAGQKKSKNGSEEQDKKVEMLMAPSKEQDVLLSHQDTKQEGGLGKKKGLSKKQKSENVAVLVDEPLIHATTYMPLDNANSNLMMDKREIIDMIKPDHVEGIQKSGTKKLKIETDKENAEVKFKDFLLSLKTMMFSEDEALCVVDLLKEKSGVIKEALKKSNKGELSGLLHQLQEKERLLSAMKEDAAASKERCKRLTQEMMTEKERSSVVIARMKDRIGTLEKEHNIFQNKMHASYQETQQMQMKFQQVQEQMEAEIAHLKQENGILRDAVSNTTNQLESKQSAELNKLRQDCGRLVSELNEKTGKLQQEGVQKKNAEQAATQLKVQLQEAERRWEEVQSYIRKRTAEHEAAQQDLQSKFVAKENEVQSLHSKLTDTLVSKQQLEQRLMQLMESEQKRASKEESLQIQVQDILEQNEALKAQIQQFHSQIAAQTSASVLAEELHKVIAEKDKQLKQTEDSLANEQDHLASKEEELKDVQNMNFLLKAEVQKWQALANEQAATAHEVEKMQKSIHVKEDEIRLLEEQLQHEVASKMEELKILSEQNKALQSEVRKLQTAVSQQPNKDVVEQMEKCIQEKDEKLRTVEELLETGLIQVATREEELSAIRTENSTLTREVQELKAKQSDQVSFVSLIEDLKRVIHEKDGQIKSVEELLEVELLKVANKEKTVQALKQEIEVLKEEIGNAQLEKAHQLSVTSQVQELQNLLRGKEEQVNSMKAALEDRDRGLTGRGTCAQVCSTPQFEELESVLKEKDNEIKRIEVKLKDTESDVSKMSELLKEVQEENKFLKCQLSHQKHQQASFPSQEELQTVISEKEKEITDLCNELESLKNAVEHQRKKNNDLREKNWEAMEALASTEKMLQDRVNKTSKERRQHVEAIELESKDLLKRLFPTVSVPSNLNYSEWLRGFEKKAKACVAGTSDAEAVKVLEHRLKEASEMHTLLQLECEKYKSVLAETEGILQKLQRSVEQEESKWKIKADESQRMIKQMQSSFTASERELERLRQENKDMENLRREREHLEMELEKAEMERSTYVMEVRELKDLLTELQKKLDDSYSEAVRQNEELNLLKTQLNETHSKLQNEQTERKKVADDLHKAQQSLNSIHSKISLKAAGDTVVIENSDISPEMESPEKETMSVSLNQTVTQLQQLLQEVNQQLTKET.

The Cytoplasmic segment spans residues 1 to 8 (MELYESTY). A helical; Signal-anchor for type II membrane protein transmembrane segment spans residues 9–29 (FIVLIPSVVITVIFLFFWLFM). The Lumenal portion of the chain corresponds to 30–1327 (KETLYDEVLA…EVNQQLTKET (1298 aa)). Disordered stretches follow at residues 49-181 (STKT…EQDK) and 197-216 (LSHQDTKQEGGLGKKKGLSK). N-linked (GlcNAc...) asparagine glycosylation occurs at Asn69. Composition is skewed to basic and acidic residues over residues 73–86 (RESDSEHVPRDFKL) and 111–135 (VRERQKKEKKQKPSLEEQVIKESDA). A phosphoserine mark is found at Ser75 and Ser77. Residues 163-173 (LKKKAGQKKSK) are compositionally biased toward basic residues. Residues 329–1327 (ELSGLLHQLQ…EVNQQLTKET (999 aa)) adopt a coiled-coil conformation. Asn1031 carries N-linked (GlcNAc...) asparagine glycosylation. Ser1060 carries the phosphoserine modification. Residue Asn1066 is glycosylated (N-linked (GlcNAc...) asparagine). Phosphoserine is present on Ser1290.

The protein belongs to the kinectin family. In terms of tissue distribution, expressed in all tissues examined including 12-day embryo, adult heart, brain, ovary, kidney, lung, small intestine, spleen, thymus and pancreas.

Its subcellular location is the endoplasmic reticulum membrane. Its function is as follows. Receptor for kinesin thus involved in kinesin-driven vesicle motility. Accumulates in integrin-based adhesion complexes (IAC) upon integrin aggregation by fibronectin. This is Kinectin from Mus musculus (Mouse).